We begin with the raw amino-acid sequence, 444 residues long: Phosphoglucosamine mutase (444 aa).

The active-site Phosphoserine intermediate is the serine 100. Mg(2+) contacts are provided by serine 100, aspartate 240, aspartate 242, and aspartate 244. At serine 100 the chain carries Phosphoserine.

It belongs to the phosphohexose mutase family. The cofactor is Mg(2+). Activated by phosphorylation.

It catalyses the reaction alpha-D-glucosamine 1-phosphate = D-glucosamine 6-phosphate. Its function is as follows. Catalyzes the conversion of glucosamine-6-phosphate to glucosamine-1-phosphate. In Moorella thermoacetica (strain ATCC 39073 / JCM 9320), this protein is Phosphoglucosamine mutase.